The primary structure comprises 122 residues: Large ribosomal subunit protein uL14 (122 aa).

It belongs to the universal ribosomal protein uL14 family. In terms of assembly, part of the 50S ribosomal subunit. Forms a cluster with proteins L3 and L19. In the 70S ribosome, L14 and L19 interact and together make contacts with the 16S rRNA in bridges B5 and B8.

In terms of biological role, binds to 23S rRNA. Forms part of two intersubunit bridges in the 70S ribosome. This is Large ribosomal subunit protein uL14 from Jannaschia sp. (strain CCS1).